The following is a 762-amino-acid chain: MGMRTVLTGLAGMLLGSMMPVQADMPRPTGLAADIRWTAYGVPHIRAKDERGLGYGIGYAYARDNACLLAEEIVTARGERARYFGSEGKSSAELDNLPSDIFYAWLNQPEALQAFWQAQTPAVRQLLEGYAAGFNRFLREADGKTTSCLGQPWLRAIATDDLLRLTRRLLVEGGVGQFADALVAAAPPGAEKVALSGEQAFQVAEQRRQRFRLERGSNAIAVGSERSADGKGMLLANPHFPWNGAMRFYQMHLTIPGRLDVMGASLPGLPVVNIGFSRHLAWTHTVDTSSHFTLYRLALDPKDPRRYLVDGRSLPLEEKSVAIEVRGADGKLSRVEHKVYQSIYGPLVVWPGKLDWNRSEAYALRDANLENTRVLQQWYSINQASDVADLRRRVEALQGIPWVNTLAADEQGNALYMNQSVVPYLKPELIPACAIPQLVAEGLPALQGQDSRCAWSRDPAAAQAGITPAAQLPVLLRRDFVQNSNDSAWLTNPASPLQGFSPLVSQEKPIGPRARYALSRLQGKQPLEAKTLEEMVTANHVFSADQVLPDLLRLCRDNQGEKSLARACAALAQWDRGANLDSGSGFVYFQRFMQRFAELDGAWKEPFDAQRPLDTPQGIALDRPQVATQVRQALADAAAEVEKSGIPDGARWGDLQVSTRGQERIAIPGGDGHFGVYNAIQSVRKGDHLEVVGGTSYIQLVTFPEEGPKARGLLAFSQSSDPRSPHYRDQTELFSRQQWQTLPFSDRQIDADPQLQRLSIRE.

The N-terminal stretch at 1-23 (MGMRTVLTGLAGMLLGSMMPVQA) is a signal peptide. Residues 194–216 (ALSGEQAFQVAEQRRQRFRLERG) constitute a propeptide, spacer peptide. Serine 217 acts as the Nucleophile in catalysis.

It belongs to the peptidase S45 family. Heterodimer of an alpha subunit and a beta subunit processed from the same precursor.

It localises to the periplasm. It catalyses the reaction an N-acyl-L-homoserine lactone + H2O = L-homoserine lactone + a carboxylate. In terms of biological role, catalyzes the deacylation of acyl-homoserine lactone (AHL or acyl-HSL), releasing homoserine lactone (HSL) and the corresponding fatty acid. Possesses a specificity for the degradation of long-chain acyl-HSLs (side chains of 11 to 14 carbons in length). Degrades 3-oxo-C12-HSL, one of the two main AHL signal molecules of P.aeruginosa, and thereby functions as a quorum quencher, inhibiting the las quorum-sensing system. Therefore, may enable P.aeruginosa to modulate its own quorum-sensing-dependent pathogenic potential. Also appears to be required for pyoverdin biosynthesis. The sequence is that of Acyl-homoserine lactone acylase PvdQ (pvdQ) from Pseudomonas aeruginosa (strain ATCC 15692 / DSM 22644 / CIP 104116 / JCM 14847 / LMG 12228 / 1C / PRS 101 / PAO1).